Consider the following 173-residue polypeptide: Large ribosomal subunit protein uL10 (173 aa).

This sequence belongs to the universal ribosomal protein uL10 family. Part of the ribosomal stalk of the 50S ribosomal subunit. The N-terminus interacts with L11 and the large rRNA to form the base of the stalk. The C-terminus forms an elongated spine to which L12 dimers bind in a sequential fashion forming a multimeric L10(L12)X complex.

Forms part of the ribosomal stalk, playing a central role in the interaction of the ribosome with GTP-bound translation factors. This Beutenbergia cavernae (strain ATCC BAA-8 / DSM 12333 / CCUG 43141 / JCM 11478 / NBRC 16432 / NCIMB 13614 / HKI 0122) protein is Large ribosomal subunit protein uL10.